The sequence spans 206 residues: Protein GrpE (206 aa).

This sequence belongs to the GrpE family. In terms of assembly, homodimer.

It is found in the cytoplasm. In terms of biological role, participates actively in the response to hyperosmotic and heat shock by preventing the aggregation of stress-denatured proteins, in association with DnaK and GrpE. It is the nucleotide exchange factor for DnaK and may function as a thermosensor. Unfolded proteins bind initially to DnaJ; upon interaction with the DnaJ-bound protein, DnaK hydrolyzes its bound ATP, resulting in the formation of a stable complex. GrpE releases ADP from DnaK; ATP binding to DnaK triggers the release of the substrate protein, thus completing the reaction cycle. Several rounds of ATP-dependent interactions between DnaJ, DnaK and GrpE are required for fully efficient folding. The chain is Protein GrpE from Psychromonas ingrahamii (strain DSM 17664 / CCUG 51855 / 37).